Consider the following 884-residue polypeptide: MAAEKTLQEYGVLCIQEYRKSSKVESSARNSFMGLKDHLGHDLGHLYMESTDPQMSAAVPWPMVEKPTMDTVNSGKEGKGVSEENVSSGDSEGSTSSDHESEQLSSLSVEPCSLTKTHRQLCRSPCLEPRLLKHSDILQDFKPEESQTPSKEVKKPPDVVREYQTKLEFALKLGYSEEQVQLVLNKLGTDALINDILGELVKLGNKSEADQTVSTINSVMRETSSLESQRSESPMQEVVVDDGENLRPVVIDGSNVAMSHGNKEVFSCRGIKLAVDWFLERGHKDITVFVPAWRKEQSRPDALITDQEILRKLEKEKILVFTPSRRVQGRRVVCYDDRFIVKLAFESDGIIVSNDNYRDLANEKPEWKKFIDERLLMYSFVNDKFMPPDDPLGRHGPSLDNFLRKKPIVPEHKKQPCPYGKKCTYGHKCKYYHPERGSQPQRSVADELRAMSRNTAAKTTNEGGLVKSNSVPCSTKADSTSDVKRGAPKRQSDPSIRTHVYQDIEEKLPTKNKLETRSVPSLVSIPATSTAKPQSTTPLSNGLPSGVHFPPQDQRPQGQYPPMMMATKNHGTPMPYEQYPKCDSPVDVGYYSMLNAYSNLSISGPRSPERRFSLDTDYRVNSVASDCSSEGSMSCGSSDSYVGYNDRSYVSSPDPQLEESLKCQHMHPHSRLNSQPFLQNFHDPLTRVQSYSHEEPKFHPKRPLPHLAMHLQHPAVGARSSCPGDYPSPPSSAHSKAPHLGRSLVATRIDSISDSRLYDSSPSRQRKPYSRQEGLGSWGRPSYGLEAYGYRQTYSLPDNSTPPCYESITFQSLPEQQEPTWRIPYCGMPHDPPRYQDNREKIFINLCNIFPPDLVRLVMKRNPHMTDAQQLAAAILVEKSQLGY.

The interval 66 to 108 is disordered; the sequence is KPTMDTVNSGKEGKGVSEENVSSGDSEGSTSSDHESEQLSSLS. A compositionally biased stretch (low complexity) spans 87–96; the sequence is SSGDSEGSTS. S231 is subject to Phosphoserine. An RNase NYN domain is found at 246–401; it reads LRPVVIDGSN…LGRHGPSLDN (156 aa). The C3H1-type zinc finger occupies 411 to 436; it reads EHKKQPCPYGKKCTYGHKCKYYHPER. Polar residues predominate over residues 456–478; the sequence is AAKTTNEGGLVKSNSVPCSTKAD. 3 disordered regions span residues 456-548, 716-739, and 755-776; these read AAKT…SGVH, VGAR…KAPH, and SRLY…EGLG. Residues 500–516 are compositionally biased toward basic and acidic residues; that stretch reads VYQDIEEKLPTKNKLET. A compositionally biased stretch (polar residues) spans 518-543; that stretch reads SVPSLVSIPATSTAKPQSTTPLSNGL.

It belongs to the ZC3H12 family. Mg(2+) serves as cofactor.

May function as RNase and regulate the levels of target RNA species. The protein is Probable ribonuclease ZC3H12C (Zc3h12c) of Mus musculus (Mouse).